The chain runs to 975 residues: E3 ubiquitin-protein ligase NEDD4-like (975 aa).

Alanine 2 is modified (N-acetylalanine). In terms of domain architecture, C2 spans 4–126 (GLGEPVYGLS…TEDPTMERPY (123 aa)). Disordered stretches follow at residues 178–202 (DSNDSASQHQEELPPPPLPPGWEEK), 244–272 (AAHRRFRSRRHISEDLEPEPSEGGDVPEP), and 285–312 (DSLGLALPPPPASPGSRTSPQELSEELS). The WW 1 domain occupies 193–226 (PPLPPGWEEKVDNLGRTYYVNHNNRTTQWHRPSL). Serine 312 is subject to Phosphoserine. Threonine 318 carries the phosphothreonine modification. Serine 342 carries the post-translational modification Phosphoserine; by WNK1 and WNK4. Disordered regions lie at residues 349–393 (EQGH…GWEE) and 424–496 (GASG…KVTQ). Threonine 367 carries the phosphothreonine; by SGK1 modification. One can recognise a WW 2 domain in the interval 385-418 (PGLPSGWEERKDAKGRTYYVNHNNRTTTWTRPIM). The residue at position 446 (serine 446) is a Phosphoserine. A Phosphoserine; by PKA and SGK1 modification is found at serine 448. Residue serine 449 is modified to Phosphoserine; by WNK1 and WNK4. A compositionally biased stretch (basic and acidic residues) spans 460-471 (GAKDSPVRRAVK). Phosphoserine is present on residues serine 464, serine 475, serine 479, serine 483, and serine 487. WW domains lie at 497–530 (SFLPPGWEMRIAPNGRPFFIDHNTKTTTWEDPRL) and 548–581 (GPLPPGWEERIHLDGRTFYIDHNSKITQWEDPRL). In terms of domain architecture, HECT spans 640–974 (RPDVLKARLW…VENAQGFEGV (335 aa)). The active-site Glycyl thioester intermediate is the cysteine 942.

Interacts with UBE2E3. Interacts with NDFIP1; this interaction activates the E3 ubiquitin-protein ligase. Interacts with NDFIP2; this interaction activates the E3 ubiquitin-protein ligase. Interacts (via WW domains) with SCN1A. Interacts (via WW domains) with SCN2A. Interacts (via WW domains) with SCN3A. Interacts (via WW domains) with SCN5A. Interacts (via WW domains) with SCN8A. Interacts (via WW domains) with SCN9A. Interacts (via WW domains) with SCN10A. Interacts (via WW domains) with CLCN5. Interacts with SMAD2. Interacts with SMAD3. Interacts with SMAD6. Interacts with SMAD7. The phosphorylated form interacts with 14-3-3 proteins. Interacts with TNK2. Interacts with WNK1. Interacts with SGK1. Interacts (via C2 domain) with NPC2. Interacts with ARRDC4. Interacts with KCNQ1; promotes internalization of KCNQ1. Interacts (via domains WW1, 3 and 4) with USP36; the interaction inhibits ubiquitination of, at least, NTRK1, KCNQ2 and KCNQ3 by NEDD4L. Interacts with PRRG4 (via cytoplasmic domain). Interacts with LDLRAD3; the interaction is direct. Interacts with UBE2D2. Interacts with TTYH2 and TTYH3. In terms of assembly, (Microbial infection) Interacts with Epstein-Barr virus LMP2A. Post-translationally, phosphorylated by SGK1 or PKA; which impairs interaction with SCNN. Interaction with YWHAH inhibits dephosphorylation. In terms of processing, auto-ubiquitinated. Deubiquitinated by USP36, no effect on NEDD4L protein levels. Both proteins interact and regulate each other's ubiquitination levels. As to expression, ubiquitously expressed, with highest levels in prostate, pancreas, and kidney. Expressed in melanocytes.

The protein localises to the cytoplasm. The protein resides in the golgi apparatus. Its subcellular location is the endosome. It is found in the multivesicular body. The enzyme catalyses S-ubiquitinyl-[E2 ubiquitin-conjugating enzyme]-L-cysteine + [acceptor protein]-L-lysine = [E2 ubiquitin-conjugating enzyme]-L-cysteine + N(6)-ubiquitinyl-[acceptor protein]-L-lysine.. It carries out the reaction [E2 ubiquitin-conjugating enzyme]-S-ubiquitinyl-L-cysteine + [acceptor protein]-L-cysteine = [E2 ubiquitin-conjugating enzyme]-L-cysteine + [acceptor protein]-S-ubiquitinyl-L-cysteine.. It participates in protein modification; protein ubiquitination. Activated by NDFIP1- and NDFIP2-binding. Functionally, E3 ubiquitin-protein ligase that mediates the polyubiquitination of lysine and cysteine residues on target proteins and is thereby implicated in the regulation of various signaling pathways including autophagy, innate immunity or DNA repair. Inhibits TGF-beta signaling by triggering SMAD2 and TGFBR1 ubiquitination and proteasome-dependent degradation. Downregulates autophagy and cell growth by ubiquitinating and reducing cellular ULK1 or ASCT2 levels. Promotes ubiquitination and internalization of various plasma membrane channels such as ENaC, SCN2A/Nav1.2, SCN3A/Nav1.3, SCN5A/Nav1.5, SCN9A/Nav1.7, SCN10A/Nav1.8, KCNA3/Kv1.3, KCNH2, EAAT1, KCNQ2/Kv7.2, KCNQ3/Kv7.3 or CLC5. Promotes ubiquitination and degradation of SGK1 and TNK2. Ubiquitinates BRAT1 and this ubiquitination is enhanced in the presence of NDFIP1. Plays a role in dendrite formation by melanocytes. Involved in the regulation of TOR signaling. Ubiquitinates and regulates protein levels of NTRK1 once this one is activated by NGF. Plays a role in antiviral innate immunity by catalyzing 'Lys-29'-linked cysteine ubiquitination of TRAF3, resulting in enhanced 'Lys-48' and 'Lys-63'-linked ubiquitination of TRAF3. Ubiquitinates TTYH2 and TTYH3 and regulates protein levels of TTYH2. The protein is E3 ubiquitin-protein ligase NEDD4-like of Homo sapiens (Human).